Here is a 608-residue protein sequence, read N- to C-terminus: Isocitrate dehydrogenase kinase/phosphatase (608 aa).

Residues 328 to 334 and K349 each bind ATP; that span reads APGIKGL. D384 is an active-site residue.

This sequence belongs to the AceK family.

It localises to the cytoplasm. The enzyme catalyses L-seryl-[isocitrate dehydrogenase] + ATP = O-phospho-L-seryl-[isocitrate dehydrogenase] + ADP + H(+). Bifunctional enzyme which can phosphorylate or dephosphorylate isocitrate dehydrogenase (IDH) on a specific serine residue. This is a regulatory mechanism which enables bacteria to bypass the Krebs cycle via the glyoxylate shunt in response to the source of carbon. When bacteria are grown on glucose, IDH is fully active and unphosphorylated, but when grown on acetate or ethanol, the activity of IDH declines drastically concomitant with its phosphorylation. This chain is Isocitrate dehydrogenase kinase/phosphatase, found in Cupriavidus pinatubonensis (strain JMP 134 / LMG 1197) (Cupriavidus necator (strain JMP 134)).